A 730-amino-acid polypeptide reads, in one-letter code: Elongation factor 2 (730 aa).

Residues 19–228 (TKIRNIGIVA…TGVSFKDVYD (210 aa)) form the tr-type G domain. GTP-binding positions include 28–35 (AHIDHGKT), 94–98 (DTPGH), and 148–151 (NKVD). A Diphthamide modification is found at H596.

The protein belongs to the TRAFAC class translation factor GTPase superfamily. Classic translation factor GTPase family. EF-G/EF-2 subfamily.

It is found in the cytoplasm. In terms of biological role, catalyzes the GTP-dependent ribosomal translocation step during translation elongation. During this step, the ribosome changes from the pre-translocational (PRE) to the post-translocational (POST) state as the newly formed A-site-bound peptidyl-tRNA and P-site-bound deacylated tRNA move to the P and E sites, respectively. Catalyzes the coordinated movement of the two tRNA molecules, the mRNA and conformational changes in the ribosome. This is Elongation factor 2 from Methanosarcina barkeri (strain Fusaro / DSM 804).